The following is a 93-amino-acid chain: uncharacterized protein (93 aa).

A signal peptide spans 1-22 (MNKYWLSGIIFLAYGLASPAFS).

This is an uncharacterized protein from Escherichia coli (strain K12).